Consider the following 962-residue polypeptide: CRACD-like protein (962 aa).

3 disordered regions span residues 38–102 (GKKK…PESG), 131–174 (NVKM…HDVG), and 212–871 (PAES…QEPV). A compositionally biased stretch (polar residues) spans 46-61 (PSSTGSSTWKQSQTRN). S92 is subject to Phosphoserine. Over residues 224-244 (AKHKLQVKPRNQRSSKMRRLS) the composition is skewed to basic residues. Over residues 245–256 (SRAQSESLSDLT) the composition is skewed to polar residues. Basic and acidic residues predominate over residues 266 to 278 (EKPLLEVSPEERP). 2 stretches are compositionally biased toward pro residues: residues 292–303 (EPGPPAPLPPPG) and 354–365 (PPSPPEGPPNPG). Residues 407–425 (PEGDTTPPETDPAATSEAP) are compositionally biased toward low complexity. 2 stretches are compositionally biased toward basic and acidic residues: residues 429-440 (DGPERSVPKEAE) and 459-480 (EPER…ERIG). Residue S490 is modified to Phosphoserine. The span at 503 to 521 (AAASEGPAASPPLAAAESP) shows a compositional bias: low complexity. Composition is skewed to basic and acidic residues over residues 536–546 (APERPKAERAE), 555–570 (AAPE…ELRG), 631–642 (KLAERGPQDSGD), and 709–728 (YSAE…EEKC). Over residues 753 to 764 (PEPLSSKPPLPR) the composition is skewed to pro residues. Basic and acidic residues-rich tracts occupy residues 784-806 (PGER…RGAE) and 844-869 (QEDK…RGQE).

This is CRACD-like protein from Homo sapiens (Human).